The following is an 89-amino-acid chain: MAKKEMVEFDEAIHGEDLAKFIKEASDHKLKISGYNELIKDIRIRAKDELGVDGKMFNRLLALYHKDNRDVFEAETEEVVELYDTVFSK.

As to quaternary structure, homodimer.

Its function is as follows. May play a role in transcription of several T4 genes. Binds double-stranded DNA and interacts preferentially with T4 late promoter regions. The polypeptide is Double-stranded DNA-binding protein (dsbA) (Enterobacteria phage T4 (Bacteriophage T4)).